The following is a 255-amino-acid chain: Eukaryotic translation initiation factor 3 subunit J (255 aa).

2 stretches are compositionally biased toward acidic residues: residues 1–16 and 34–53; these read MAENDSWDADDFEAED and EGEDEEEDVKDNWDDEEEAQ. The tract at residues 1 to 107 is disordered; that stretch reads MAENDSWDAD…SSNLPEITPE (107 aa). Residues 54–95 are compositionally biased toward basic and acidic residues; the sequence is DATKQEPQKTELKVPEKKKLQEKIKEKENLQKKRKEELKKQA. Positions 69–131 form a coiled coil; the sequence is EKKKLQEKIK…DSDLELAKEA (63 aa).

It belongs to the eIF-3 subunit J family. Component of the eukaryotic translation initiation factor 3 (eIF-3) complex, which is composed of 13 subunits: eif3a, eif3b, eif3c, eif3d, eif3e, eif3f, eif3g, eif3h, eif3i, eif3j, eif3k, eif3l and eif3m.

Its subcellular location is the cytoplasm. Its function is as follows. Component of the eukaryotic translation initiation factor 3 (eIF-3) complex, which is involved in protein synthesis of a specialized repertoire of mRNAs and, together with other initiation factors, stimulates binding of mRNA and methionyl-tRNAi to the 40S ribosome. The eIF-3 complex specifically targets and initiates translation of a subset of mRNAs involved in cell proliferation. This is Eukaryotic translation initiation factor 3 subunit J (eif3j) from Xenopus laevis (African clawed frog).